The following is a 125-amino-acid chain: Small ribosomal subunit protein uS12 (125 aa).

Positions 1–27 (MPTINQLVRKGREKGEQKSTAPALKSC) are disordered. Residue Asp89 is modified to 3-methylthioaspartic acid. The interval 103–125 (DASGVQKRNQGRSKYGTKRPKKK) is disordered. A compositionally biased stretch (basic residues) spans 111-125 (NQGRSKYGTKRPKKK).

It belongs to the universal ribosomal protein uS12 family. In terms of assembly, part of the 30S ribosomal subunit. Contacts proteins S8 and S17. May interact with IF1 in the 30S initiation complex.

Functionally, with S4 and S5 plays an important role in translational accuracy. Interacts with and stabilizes bases of the 16S rRNA that are involved in tRNA selection in the A site and with the mRNA backbone. Located at the interface of the 30S and 50S subunits, it traverses the body of the 30S subunit contacting proteins on the other side and probably holding the rRNA structure together. The combined cluster of proteins S8, S12 and S17 appears to hold together the shoulder and platform of the 30S subunit. The protein is Small ribosomal subunit protein uS12 of Syntrophomonas wolfei subsp. wolfei (strain DSM 2245B / Goettingen).